The primary structure comprises 309 residues: Porphobilinogen deaminase (309 aa).

Cysteine 240 is subject to S-(dipyrrolylmethanemethyl)cysteine.

Belongs to the HMBS family. As to quaternary structure, monomer. Requires dipyrromethane as cofactor.

It catalyses the reaction 4 porphobilinogen + H2O = hydroxymethylbilane + 4 NH4(+). It participates in porphyrin-containing compound metabolism; protoporphyrin-IX biosynthesis; coproporphyrinogen-III from 5-aminolevulinate: step 2/4. In terms of biological role, tetrapolymerization of the monopyrrole PBG into the hydroxymethylbilane pre-uroporphyrinogen in several discrete steps. The sequence is that of Porphobilinogen deaminase from Brevibacillus brevis (strain 47 / JCM 6285 / NBRC 100599).